The chain runs to 396 residues: Large ribosomal subunit protein uL4A (396 aa).

Positions 352–373 (KAKEKKPDDGKPKAKKPLDAKT) are enriched in basic and acidic residues. A disordered region spans residues 352–374 (KAKEKKPDDGKPKAKKPLDAKTK).

It belongs to the universal ribosomal protein uL4 family. Component of the large ribosomal subunit.

It is found in the cytoplasm. Its function is as follows. Component of the large ribosomal subunit. The ribosome is a large ribonucleoprotein complex responsible for the synthesis of proteins in the cell. This Xenopus laevis (African clawed frog) protein is Large ribosomal subunit protein uL4A (rpl4-a).